The following is a 378-amino-acid chain: Small ribosomal subunit protein bS1 (378 aa).

S1 motif domains follow at residues E1–R66, G87–K155, G172–K242, G259–K329, and G346–A378.

It belongs to the bacterial ribosomal protein bS1 family.

Binds mRNA; thus facilitating recognition of the initiation point. It is needed to translate mRNA with a short Shine-Dalgarno (SD) purine-rich sequence. This Providencia sp protein is Small ribosomal subunit protein bS1 (rpsA).